The sequence spans 196 residues: dTTP/UTP pyrophosphatase (196 aa).

D72 serves as the catalytic Proton acceptor.

It belongs to the Maf family. YhdE subfamily. The cofactor is a divalent metal cation.

Its subcellular location is the cytoplasm. It catalyses the reaction dTTP + H2O = dTMP + diphosphate + H(+). The catalysed reaction is UTP + H2O = UMP + diphosphate + H(+). Its function is as follows. Nucleoside triphosphate pyrophosphatase that hydrolyzes dTTP and UTP. May have a dual role in cell division arrest and in preventing the incorporation of modified nucleotides into cellular nucleic acids. The sequence is that of dTTP/UTP pyrophosphatase from Chlamydia trachomatis serovar L2 (strain ATCC VR-902B / DSM 19102 / 434/Bu).